An 81-amino-acid chain; its full sequence is uncharacterized protein (81 aa).

This is an uncharacterized protein from Sulfolobus islandicus filamentous virus (isolate Iceland/Hveragerdi) (SIFV).